Here is a 69-residue protein sequence, read N- to C-terminus: Large ribosomal subunit protein uL29 (69 aa).

Belongs to the universal ribosomal protein uL29 family.

The protein is Large ribosomal subunit protein uL29 of Granulibacter bethesdensis (strain ATCC BAA-1260 / CGDNIH1).